The primary structure comprises 405 residues: Acetylornithine aminotransferase 1 (405 aa).

Pyridoxal 5'-phosphate-binding positions include 103-104 (GA) and Phe136. Arg139 provides a ligand contact to N(2)-acetyl-L-ornithine. Residue 221–224 (DEVQ) participates in pyridoxal 5'-phosphate binding. The residue at position 250 (Lys250) is an N6-(pyridoxal phosphate)lysine. Ser278 is a N(2)-acetyl-L-ornithine binding site. Residue Thr279 coordinates pyridoxal 5'-phosphate.

It belongs to the class-III pyridoxal-phosphate-dependent aminotransferase family. ArgD subfamily. Homodimer. It depends on pyridoxal 5'-phosphate as a cofactor.

It is found in the cytoplasm. It catalyses the reaction N(2)-acetyl-L-ornithine + 2-oxoglutarate = N-acetyl-L-glutamate 5-semialdehyde + L-glutamate. The protein operates within amino-acid biosynthesis; L-arginine biosynthesis; N(2)-acetyl-L-ornithine from L-glutamate: step 4/4. In Bradyrhizobium diazoefficiens (strain JCM 10833 / BCRC 13528 / IAM 13628 / NBRC 14792 / USDA 110), this protein is Acetylornithine aminotransferase 1.